Here is a 139-residue protein sequence, read N- to C-terminus: Putative nickel-responsive regulator (139 aa).

The Ni(2+) site is built by His-79, His-90, His-92, and Cys-98.

It belongs to the transcriptional regulatory CopG/NikR family. Requires Ni(2+) as cofactor.

Transcriptional regulator. The polypeptide is Putative nickel-responsive regulator (Geobacter sulfurreducens (strain ATCC 51573 / DSM 12127 / PCA)).